A 277-amino-acid polypeptide reads, in one-letter code: E3 ubiquitin-protein ligase CCNB1IP1 (277 aa).

An RING-type; atypical zinc finger spans residues Cys4–Cys51. Residues Gln127–Arg182 adopt a coiled-coil conformation.

As to quaternary structure, interacts with CCNB1, UBE2L3 and NF2. Post-translationally, ubiquitinated; autoubiquitinated. Phosphorylated by CDK1 on serine or threonine residues (in vitro). Highly expressed in heart. Detected at intermediate levels in liver and kidney, and at low levels in placenta, brain and lung.

The protein localises to the nucleus. It localises to the chromosome. It catalyses the reaction S-ubiquitinyl-[E2 ubiquitin-conjugating enzyme]-L-cysteine + [acceptor protein]-L-lysine = [E2 ubiquitin-conjugating enzyme]-L-cysteine + N(6)-ubiquitinyl-[acceptor protein]-L-lysine.. The protein operates within protein modification; protein ubiquitination. Its function is as follows. Ubiquitin E3 ligase that acts as a limiting factor for crossing-over during meiosis: required during zygonema to limit the colocalization of RNF212 with MutS-gamma-associated recombination sites and thereby establish early differentiation of crossover and non-crossover sites. Later, it is directed by MutL-gamma to stably accumulate at designated crossover sites. Probably promotes the dissociation of RNF212 and MutS-gamma to allow the progression of recombination and the implementation of the final steps of crossing over. Modulates cyclin-B levels and participates in the regulation of cell cycle progression through the G2 phase. Overexpression causes delayed entry into mitosis. This is E3 ubiquitin-protein ligase CCNB1IP1 (CCNB1IP1) from Homo sapiens (Human).